Here is a 183-residue protein sequence, read N- to C-terminus: GMP synthase [glutamine-hydrolyzing] subunit A (183 aa).

Residues 2 to 183 (KIYVIYNYGQ…YRNFIEICKK (182 aa)) form the Glutamine amidotransferase type-1 domain. Residue Cys-74 is the Nucleophile of the active site. Residues His-161 and Glu-163 contribute to the active site.

As to quaternary structure, heterodimer composed of a glutamine amidotransferase subunit (A) and a GMP-binding subunit (B).

The catalysed reaction is XMP + L-glutamine + ATP + H2O = GMP + L-glutamate + AMP + diphosphate + 2 H(+). Its pathway is purine metabolism; GMP biosynthesis; GMP from XMP (L-Gln route): step 1/1. In terms of biological role, catalyzes the synthesis of GMP from XMP. The protein is GMP synthase [glutamine-hydrolyzing] subunit A of Archaeoglobus fulgidus (strain ATCC 49558 / DSM 4304 / JCM 9628 / NBRC 100126 / VC-16).